The chain runs to 237 residues: Small ribosomal subunit protein uS2m (237 aa).

This sequence belongs to the universal ribosomal protein uS2 family.

It localises to the mitochondrion. This chain is Small ribosomal subunit protein uS2m (RPS2), found in Marchantia polymorpha (Common liverwort).